Here is a 214-residue protein sequence, read N- to C-terminus: uncharacterized protein (214 aa).

5 consecutive transmembrane segments (helical) span residues 18-38 (LLLL…NTFV), 51-71 (DLAL…IVAG), 80-100 (ILVL…VLLV), 108-128 (LLVL…AFNV), and 145-165 (FFGV…GYII).

Its subcellular location is the cell membrane. This is an uncharacterized protein from Geobacillus stearothermophilus (Bacillus stearothermophilus).